We begin with the raw amino-acid sequence, 343 residues long: UPF0284 protein Msed_0735 (343 aa).

Belongs to the UPF0284 family.

This chain is UPF0284 protein Msed_0735, found in Metallosphaera sedula (strain ATCC 51363 / DSM 5348 / JCM 9185 / NBRC 15509 / TH2).